The sequence spans 431 residues: UDP-N-acetylglucosamine--N-acetylmuramyl-(pentapeptide) pyrophosphoryl-undecaprenol N-acetylglucosamine transferase (431 aa).

UDP-N-acetyl-alpha-D-glucosamine contacts are provided by residues 29-31, N141, R177, S205, I258, and Q303; that span reads TGG. Residues 370–431 are disordered; the sequence is AGSGDGQPPA…NPGASAGGAP (62 aa). The segment covering 395 to 420 has biased composition (polar residues); it reads KQGSMQTSVNGDRSAQLIATNPQSRL.

This sequence belongs to the glycosyltransferase 28 family. MurG subfamily.

The protein resides in the cell inner membrane. The catalysed reaction is di-trans,octa-cis-undecaprenyl diphospho-N-acetyl-alpha-D-muramoyl-L-alanyl-D-glutamyl-meso-2,6-diaminopimeloyl-D-alanyl-D-alanine + UDP-N-acetyl-alpha-D-glucosamine = di-trans,octa-cis-undecaprenyl diphospho-[N-acetyl-alpha-D-glucosaminyl-(1-&gt;4)]-N-acetyl-alpha-D-muramoyl-L-alanyl-D-glutamyl-meso-2,6-diaminopimeloyl-D-alanyl-D-alanine + UDP + H(+). Its pathway is cell wall biogenesis; peptidoglycan biosynthesis. Its function is as follows. Cell wall formation. Catalyzes the transfer of a GlcNAc subunit on undecaprenyl-pyrophosphoryl-MurNAc-pentapeptide (lipid intermediate I) to form undecaprenyl-pyrophosphoryl-MurNAc-(pentapeptide)GlcNAc (lipid intermediate II). This is UDP-N-acetylglucosamine--N-acetylmuramyl-(pentapeptide) pyrophosphoryl-undecaprenol N-acetylglucosamine transferase from Xanthomonas euvesicatoria pv. vesicatoria (strain 85-10) (Xanthomonas campestris pv. vesicatoria).